Reading from the N-terminus, the 434-residue chain is D-amino acid dehydrogenase (434 aa).

3 to 17 serves as a coordination point for FAD; that stretch reads VLVLGSGVIGTASAY.

It belongs to the DadA oxidoreductase family. FAD is required as a cofactor.

It carries out the reaction a D-alpha-amino acid + A + H2O = a 2-oxocarboxylate + AH2 + NH4(+). It functions in the pathway amino-acid degradation; D-alanine degradation; NH(3) and pyruvate from D-alanine: step 1/1. Oxidative deamination of D-amino acids. The chain is D-amino acid dehydrogenase from Pseudomonas putida (strain ATCC 700007 / DSM 6899 / JCM 31910 / BCRC 17059 / LMG 24140 / F1).